A 302-amino-acid polypeptide reads, in one-letter code: Bifunctional protein FolD (302 aa).

NADP(+) contacts are provided by residues 171–173 (GRS), S196, and I237.

The protein belongs to the tetrahydrofolate dehydrogenase/cyclohydrolase family. Homodimer.

It catalyses the reaction (6R)-5,10-methylene-5,6,7,8-tetrahydrofolate + NADP(+) = (6R)-5,10-methenyltetrahydrofolate + NADPH. The catalysed reaction is (6R)-5,10-methenyltetrahydrofolate + H2O = (6R)-10-formyltetrahydrofolate + H(+). It participates in one-carbon metabolism; tetrahydrofolate interconversion. Catalyzes the oxidation of 5,10-methylenetetrahydrofolate to 5,10-methenyltetrahydrofolate and then the hydrolysis of 5,10-methenyltetrahydrofolate to 10-formyltetrahydrofolate. This is Bifunctional protein FolD from Sphingopyxis alaskensis (strain DSM 13593 / LMG 18877 / RB2256) (Sphingomonas alaskensis).